The following is a 92-amino-acid chain: C-C motif chemokine 4 (92 aa).

The N-terminal stretch at 1-23 (MKLCVTVLSLLVLAAAFCSPALS) is a signal peptide. Disulfide bonds link Cys34–Cys58 and Cys35–Cys74.

The protein belongs to the intercrine beta (chemokine CC) family. As to quaternary structure, homodimer. Interacts with CCR5. Detected in peripheral blood mononuclear cells and lymph nodes.

The protein localises to the secreted. Functionally, monokine with inflammatory and chemokinetic properties. The polypeptide is C-C motif chemokine 4 (CCL4) (Macaca mulatta (Rhesus macaque)).